Reading from the N-terminus, the 375-residue chain is Probable trehalose-phosphate phosphatase 7 (375 aa).

The protein belongs to the trehalose phosphatase family. The cofactor is a divalent metal cation.

The catalysed reaction is alpha,alpha-trehalose 6-phosphate + H2O = alpha,alpha-trehalose + phosphate. Its pathway is glycan biosynthesis; trehalose biosynthesis. In terms of biological role, removes the phosphate from trehalose 6-phosphate to produce free trehalose. Trehalose accumulation in plant may improve abiotic stress tolerance. The protein is Probable trehalose-phosphate phosphatase 7 (TPP7) of Oryza sativa subsp. japonica (Rice).